Here is a 354-residue protein sequence, read N- to C-terminus: UDP-glucose 4-epimerase GEPI42 (354 aa).

Residue 11 to 42 participates in NAD(+) binding; that stretch reads TILVTGGAGFIGSHTVVQLLKQGFHVSIIDNL. Substrate is bound at residue serine 137. The active-site Proton acceptor is tyrosine 161.

This sequence belongs to the NAD(P)-dependent epimerase/dehydratase family. Requires NAD(+) as cofactor.

It carries out the reaction UDP-alpha-D-glucose = UDP-alpha-D-galactose. It functions in the pathway carbohydrate metabolism; galactose metabolism. The chain is UDP-glucose 4-epimerase GEPI42 from Cyamopsis tetragonoloba (Guar).